Here is a 677-residue protein sequence, read N- to C-terminus: DNA-directed RNA polymerase subunit beta' (677 aa).

Residues C69, C71, C87, and C90 each coordinate Zn(2+). Residues D489, D491, and D493 each contribute to the Mg(2+) site.

Belongs to the RNA polymerase beta' chain family. RpoC1 subfamily. In terms of assembly, in plastids the minimal PEP RNA polymerase catalytic core is composed of four subunits: alpha, beta, beta', and beta''. When a (nuclear-encoded) sigma factor is associated with the core the holoenzyme is formed, which can initiate transcription. Requires Mg(2+) as cofactor. It depends on Zn(2+) as a cofactor.

It localises to the plastid. The protein resides in the chloroplast. It carries out the reaction RNA(n) + a ribonucleoside 5'-triphosphate = RNA(n+1) + diphosphate. In terms of biological role, DNA-dependent RNA polymerase catalyzes the transcription of DNA into RNA using the four ribonucleoside triphosphates as substrates. The sequence is that of DNA-directed RNA polymerase subunit beta' from Spinacia oleracea (Spinach).